We begin with the raw amino-acid sequence, 122 residues long: Photosystem II extrinsic protein U (122 aa).

Positions 1–26 (MKTIVRLFAILMVLISSVGFVGSAVA) are cleaved as a signal peptide.

This sequence belongs to the PsbU family. PSII is composed of 1 copy each of membrane proteins PsbA, PsbB, PsbC, PsbD, PsbE, PsbF, PsbH, PsbI, PsbJ, PsbK, PsbL, PsbM, PsbT, PsbX, PsbY, PsbZ, Psb30/Ycf12, peripheral proteins PsbO, CyanoQ (PsbQ), PsbU, PsbV and a large number of cofactors. It forms dimeric complexes.

Its subcellular location is the cellular thylakoid membrane. In terms of biological role, one of the extrinsic, lumenal subunits of photosystem II (PSII). PSII is a light-driven water plastoquinone oxidoreductase, using light energy to abstract electrons from H(2)O, generating a proton gradient subsequently used for ATP formation. The extrinsic proteins stabilize the structure of photosystem II oxygen-evolving complex (OEC), the ion environment of oxygen evolution and protect the OEC against heat-induced inactivation. In Crocosphaera subtropica (strain ATCC 51142 / BH68) (Cyanothece sp. (strain ATCC 51142)), this protein is Photosystem II extrinsic protein U.